A 141-amino-acid chain; its full sequence is Drosulfakinins (141 aa).

An N-terminal signal peptide occupies residues Met-1–Thr-33. The propeptide occupies Thr-34–Asp-73. Positions Lys-51 to Gly-72 are disordered. Position 82 is a phenylalanine amide (Phe-82). A propeptide spanning residues Val-86–Ala-111 is cleaved from the precursor. Sulfotyrosine is present on Tyr-117. Position 122 is a phenylalanine amide (Phe-122). Tyr-134 bears the Sulfotyrosine mark. Phe-139 carries the phenylalanine amide modification.

The protein belongs to the gastrin/cholecystokinin family.

The protein resides in the secreted. Functionally, drosulfakinin-0 (DSK 0) plays diverse biological roles including regulating gut muscle contraction in adults but not in larvae. This Drosophila mauritiana (Fruit fly) protein is Drosulfakinins.